The primary structure comprises 229 residues: Transmembrane emp24 domain-containing protein 5 (229 aa).

Positions 1 to 27 (MGDKIWLPFPVLLLAALPPVLLPGAAG) are cleaved as a signal peptide. The Lumenal portion of the chain corresponds to 28–196 (FTPSLDSDFT…IQESNFDRVN (169 aa)). Positions 45-126 (RECFYQPMPL…EKVIFFELIL (82 aa)) constitute a GOLD domain. The helical transmembrane segment at 197–217 (FWSMVNLVVMVVVSAIQVYML) threads the bilayer. Topologically, residues 218 to 229 (KSLFEDKRKSRT) are cytoplasmic.

The protein belongs to the EMP24/GP25L family. Interacts with TMED9 and TMED10.

The protein localises to the endoplasmic reticulum membrane. It localises to the golgi apparatus. It is found in the cis-Golgi network membrane. The protein resides in the endoplasmic reticulum-Golgi intermediate compartment membrane. In terms of biological role, potential role in vesicular protein trafficking, mainly in the early secretory pathway. Required for the maintenance of the Golgi apparatus; involved in protein exchange between Golgi stacks during assembly. Probably not required for COPI-vesicle-mediated retrograde transport. The chain is Transmembrane emp24 domain-containing protein 5 (TMED5) from Pongo abelii (Sumatran orangutan).